Here is a 527-residue protein sequence, read N- to C-terminus: Cytochrome P450 monooxygenase aba2 (527 aa).

The chain crosses the membrane as a helical span at residues 26–46 (TTVAVLVTVALIAQVLWKIFF). N-linked (GlcNAc...) asparagine glycosylation is found at Asn-189, Asn-420, and Asn-448. Residue Cys-460 participates in heme binding. Asn-464 is a glycosylation site (N-linked (GlcNAc...) asparagine).

It belongs to the cytochrome P450 family. Heme is required as a cofactor.

Its subcellular location is the membrane. It participates in hormone biosynthesis. Functionally, cytochrome P450 monooxygenase; part of the gene cluster that mediates the biosynthesis of abscisic acid (ABA), a phytohormone that acts antagonistically toward salicylic acid (SA), jasmonic acid (JA) and ethylene (ETH) signaling, to impede plant defense responses. The first step of the pathway catalyzes the reaction from farnesyl diphosphate to alpha-ionylideneethane performed by the alpha-ionylideneethane synthase aba3 via a three-step reaction mechanism involving 2 neutral intermediates, beta-farnesene and allofarnesene. The cytochrome P450 monooxygenase aba1 might then be involved in the conversion of alpha-ionylideneethane to alpha-ionylideneacetic acid. Alpha-ionylideneacetic acid is further converted to abscisic acid in 2 steps involving the cytochrome P450 monooxygenase aba2 and the short-chain dehydrogenase/reductase aba4, via the intermediates 1'-deoxy-ABA or 1',4'-trans-diol-ABA, depending on the order of action of these 2 enzymes. Aba2 is responsible for the hydroxylation of carbon atom C-1' and aba4 might be involved in the oxidation of the C-4' carbon atom. This is Cytochrome P450 monooxygenase aba2 (aba2) from Botryotinia fuckeliana (strain B05.10) (Noble rot fungus).